The following is an 84-amino-acid chain: Cell division topological specificity factor (84 aa).

It belongs to the MinE family.

Prevents the cell division inhibition by proteins MinC and MinD at internal division sites while permitting inhibition at polar sites. This ensures cell division at the proper site by restricting the formation of a division septum at the midpoint of the long axis of the cell. The chain is Cell division topological specificity factor from Ralstonia pickettii (strain 12J).